The chain runs to 573 residues: Adenine deaminase 2 (573 aa).

It belongs to the metallo-dependent hydrolases superfamily. Adenine deaminase family. Mn(2+) serves as cofactor.

The enzyme catalyses adenine + H2O + H(+) = hypoxanthine + NH4(+). The protein is Adenine deaminase 2 of Shouchella clausii (strain KSM-K16) (Alkalihalobacillus clausii).